Reading from the N-terminus, the 174-residue chain is uncharacterized protein (174 aa).

Residues 78-97 (TFGRNIKTPDISNPTRARNE) form a disordered region.

It to yeast YMR295c.

This is an uncharacterized protein from Saccharomyces cerevisiae (strain ATCC 204508 / S288c) (Baker's yeast).